The chain runs to 67 residues: DNA-directed RNA polymerase subunit omega (67 aa).

Belongs to the RNA polymerase subunit omega family. In terms of assembly, the RNAP catalytic core consists of 2 alpha, 1 beta, 1 beta' and 1 omega subunit. When a sigma factor is associated with the core the holoenzyme is formed, which can initiate transcription.

The enzyme catalyses RNA(n) + a ribonucleoside 5'-triphosphate = RNA(n+1) + diphosphate. Its function is as follows. Promotes RNA polymerase assembly. Latches the N- and C-terminal regions of the beta' subunit thereby facilitating its interaction with the beta and alpha subunits. The polypeptide is DNA-directed RNA polymerase subunit omega (Variovorax paradoxus (strain S110)).